Reading from the N-terminus, the 331-residue chain is Large ribosomal subunit protein uL3 (331 aa).

It belongs to the universal ribosomal protein uL3 family. In terms of assembly, part of the 50S ribosomal subunit. Forms a cluster with proteins L14 and L24e.

Its function is as follows. One of the primary rRNA binding proteins, it binds directly near the 3'-end of the 23S rRNA, where it nucleates assembly of the 50S subunit. The sequence is that of Large ribosomal subunit protein uL3 from Thermoplasma acidophilum (strain ATCC 25905 / DSM 1728 / JCM 9062 / NBRC 15155 / AMRC-C165).